The primary structure comprises 199 residues: Holliday junction branch migration complex subunit RuvA (199 aa).

A domain I region spans residues 1 to 63 (MIDYIKGNLV…EDSQRLFGFT (63 aa)). The segment at 64–142 (TRTERLLFEK…DMAPMLEPAA (79 aa)) is domain II. The interval 143–153 (GADKQQKNPQL) is flexible linker. The tract at residues 153–199 (LEDALEALRALGYVEKELKKVEKQLKAETLETDEYIRRALALMLKRP) is domain III.

This sequence belongs to the RuvA family. Homotetramer. Forms an RuvA(8)-RuvB(12)-Holliday junction (HJ) complex. HJ DNA is sandwiched between 2 RuvA tetramers; dsDNA enters through RuvA and exits via RuvB. An RuvB hexamer assembles on each DNA strand where it exits the tetramer. Each RuvB hexamer is contacted by two RuvA subunits (via domain III) on 2 adjacent RuvB subunits; this complex drives branch migration. In the full resolvosome a probable DNA-RuvA(4)-RuvB(12)-RuvC(2) complex forms which resolves the HJ.

It is found in the cytoplasm. Its function is as follows. The RuvA-RuvB-RuvC complex processes Holliday junction (HJ) DNA during genetic recombination and DNA repair, while the RuvA-RuvB complex plays an important role in the rescue of blocked DNA replication forks via replication fork reversal (RFR). RuvA specifically binds to HJ cruciform DNA, conferring on it an open structure. The RuvB hexamer acts as an ATP-dependent pump, pulling dsDNA into and through the RuvAB complex. HJ branch migration allows RuvC to scan DNA until it finds its consensus sequence, where it cleaves and resolves the cruciform DNA. This chain is Holliday junction branch migration complex subunit RuvA, found in Shouchella clausii (strain KSM-K16) (Alkalihalobacillus clausii).